Reading from the N-terminus, the 377-residue chain is Cobalt-precorrin-5B C(1)-methyltransferase (377 aa).

The protein belongs to the CbiD family.

It carries out the reaction Co-precorrin-5B + S-adenosyl-L-methionine = Co-precorrin-6A + S-adenosyl-L-homocysteine. It participates in cofactor biosynthesis; adenosylcobalamin biosynthesis; cob(II)yrinate a,c-diamide from sirohydrochlorin (anaerobic route): step 6/10. Functionally, catalyzes the methylation of C-1 in cobalt-precorrin-5B to form cobalt-precorrin-6A. This chain is Cobalt-precorrin-5B C(1)-methyltransferase, found in Alkaliphilus metalliredigens (strain QYMF).